A 439-amino-acid polypeptide reads, in one-letter code: MATKHEQILTYIDSLPVGEKISVRRIAKEMKVSEGTAYRAIKEAENKGFVSTIERVGTIRIEQKKKENIEKLTYAEVVNVIDGQVLGGRAGLHKTLNKFVIGAMELDAMMRYTAAGNLLIVGNRINAHRQALEAGAAVLVTGGFNTDDSIVQLADELELPILSTSYDTFTVAAMINRAIYDQLIKKEIVLVEDILTPADRTVYLSPKDKLEKWYEKNFETGHGRFPVVDDQMKIHGILTSKDIAGHDRNASIEKVMTKNPVTVIGKTSVASAAQMMVWEGIEVLPVTDGHQKLIGMISRQDVLKALQMIQKQPQVGEKLDDIVSRGFKDEGDDKEDQTVYEYEVTPQMTNQLGTISYGVFTTILTQAANRFLRSKKRGELVIESITIFFLKPVQMESVIEVKPRILEAGRKFGKMEVEVHSQGHIVSKAMLMVQLMERS.

2 CBS domains span residues 195–254 and 256–314; these read LTPA…SIEK and MTKN…KQPQ.

This is an uncharacterized protein from Bacillus subtilis (strain 168).